Reading from the N-terminus, the 322-residue chain is Sideroflexin-2 (322 aa).

N-acetylmethionine is present on methionine 1. 5 helical membrane-spanning segments follow: residues 99 to 119, 147 to 167, 174 to 194, 223 to 243, and 266 to 286; these read GMLI…VIFW, ALSY…MNMW, LVGR…NIPM, VGIA…MILL, and LQVL…CGLF.

It belongs to the sideroflexin family. Expressed in brain, heart, kidney, spleen, thymus, liver, stomach and skin.

Its subcellular location is the mitochondrion inner membrane. The protein localises to the mitochondrion outer membrane. It catalyses the reaction L-serine(in) = L-serine(out). Its function is as follows. Mitochondrial amino-acid transporter that mediates transport of serine into mitochondria. Involved in mitochondrial iron homeostasis by regulating heme biosynthesis. This is Sideroflexin-2 from Mus musculus (Mouse).